We begin with the raw amino-acid sequence, 773 residues long: LON peptidase N-terminal domain and RING finger protein 1 (773 aa).

Positions 1–29 (MSSPAVARTSPGGSREMAPAPQGRGRFWE) are disordered. The stretch at 48-81 (WELLLRRGELLALGGHLKGALEAFAAALRRGAPA) is one TPR 1 repeat. An RING-type 1 zinc finger spans residues 123 to 159 (CLGCRGFLSEPVTVPCGHSYCRRCLRRELRARCRLCR). 3 TPR repeats span residues 212–244 (ARAA…EPSD), 246–278 (IVKI…LPDW), and 279–312 (PEVY…DEDF). Over residues 359 to 370 (EESQSLNEPSPK) the composition is skewed to polar residues. The tract at residues 359 to 388 (EESQSLNEPSPKQSEEIPEVTSEPVKGSLN) is disordered. Ser-431 is subject to Phosphoserine. Residues 479-517 (CSLCMRLFFEPVTTPCGHSFCKNCLERCLDHAPYCPLCK) form an RING-type 2 zinc finger. The region spanning 558-768 (TAELSHLTKN…KIQHILTYFS (211 aa)) is the Lon N-terminal domain.

The chain is LON peptidase N-terminal domain and RING finger protein 1 (LONRF1) from Homo sapiens (Human).